The chain runs to 367 residues: Zinc transport system membrane protein TroD (367 aa).

Transmembrane regions (helical) follow at residues 5–25 (VVLIAVVVSVACALCGVFLVL), 28–48 (ISLMSDAISHSVILGIVLGYF), 56–76 (FVPFVGAVIAGICSVICAELL), 87–107 (AVGLVFPAMFGLGVILVSLYA), 140–160 (SLVQMGSVLCGLLLLLALFFK), 170–190 (VLATSLGFSPTLINYGLMLAV), 201–221 (VGAVLVIALMITPPAAALLLT), 224–244 (LLLMLVLASLLASCASISGLF), and 251–271 (GSIAGAMATMAGVLFALVYLF).

It belongs to the ABC-3 integral membrane protein family.

It is found in the cell membrane. Its function is as follows. Part of an ATP-driven transport system TroABCD for zinc. The chain is Zinc transport system membrane protein TroD (troD) from Treponema pallidum (strain Nichols).